The sequence spans 305 residues: Large ribosomal subunit protein uL10 (305 aa).

The protein belongs to the universal ribosomal protein uL10 family. As to quaternary structure, P0 forms a pentameric complex by interaction with dimers of P1 and P2. Phosphorylated.

Functionally, ribosomal protein P0 is the functional equivalent of E.coli protein L10. This is Large ribosomal subunit protein uL10 (rplp0) from Dictyostelium discoideum (Social amoeba).